A 359-amino-acid polypeptide reads, in one-letter code: Membrane-bound lytic murein transglycosylase C (359 aa).

Positions 1-16 are cleaved as a signal peptide; the sequence is MKKYLALALIAPLLIS. Residue Cys-17 is the site of N-palmitoyl cysteine attachment. Cys-17 carries the S-diacylglycerol cysteine lipid modification.

The protein belongs to the transglycosylase Slt family.

Its subcellular location is the cell outer membrane. The catalysed reaction is Exolytic cleavage of the (1-&gt;4)-beta-glycosidic linkage between N-acetylmuramic acid (MurNAc) and N-acetylglucosamine (GlcNAc) residues in peptidoglycan, from either the reducing or the non-reducing ends of the peptidoglycan chains, with concomitant formation of a 1,6-anhydrobond in the MurNAc residue.. In terms of biological role, murein-degrading enzyme. May play a role in recycling of muropeptides during cell elongation and/or cell division. In Escherichia coli O157:H7, this protein is Membrane-bound lytic murein transglycosylase C.